Consider the following 254-residue polypeptide: 4-hydroxy-tetrahydrodipicolinate reductase (254 aa).

NAD(+) contacts are provided by residues 8 to 13 (GASGKM), 87 to 89 (GTT), and 111 to 114 (ATNM). Histidine 143 acts as the Proton donor/acceptor in catalysis. Histidine 144 contacts (S)-2,3,4,5-tetrahydrodipicolinate. Residue lysine 147 is the Proton donor of the active site. 153–154 (GT) contributes to the (S)-2,3,4,5-tetrahydrodipicolinate binding site.

It belongs to the DapB family.

Its subcellular location is the cytoplasm. The catalysed reaction is (S)-2,3,4,5-tetrahydrodipicolinate + NAD(+) + H2O = (2S,4S)-4-hydroxy-2,3,4,5-tetrahydrodipicolinate + NADH + H(+). It carries out the reaction (S)-2,3,4,5-tetrahydrodipicolinate + NADP(+) + H2O = (2S,4S)-4-hydroxy-2,3,4,5-tetrahydrodipicolinate + NADPH + H(+). It participates in amino-acid biosynthesis; L-lysine biosynthesis via DAP pathway; (S)-tetrahydrodipicolinate from L-aspartate: step 4/4. Catalyzes the conversion of 4-hydroxy-tetrahydrodipicolinate (HTPA) to tetrahydrodipicolinate. The polypeptide is 4-hydroxy-tetrahydrodipicolinate reductase (Campylobacter fetus subsp. fetus (strain 82-40)).